Consider the following 155-residue polypeptide: SsrA-binding protein (155 aa).

This sequence belongs to the SmpB family.

Its subcellular location is the cytoplasm. In terms of biological role, required for rescue of stalled ribosomes mediated by trans-translation. Binds to transfer-messenger RNA (tmRNA), required for stable association of tmRNA with ribosomes. tmRNA and SmpB together mimic tRNA shape, replacing the anticodon stem-loop with SmpB. tmRNA is encoded by the ssrA gene; the 2 termini fold to resemble tRNA(Ala) and it encodes a 'tag peptide', a short internal open reading frame. During trans-translation Ala-aminoacylated tmRNA acts like a tRNA, entering the A-site of stalled ribosomes, displacing the stalled mRNA. The ribosome then switches to translate the ORF on the tmRNA; the nascent peptide is terminated with the 'tag peptide' encoded by the tmRNA and targeted for degradation. The ribosome is freed to recommence translation, which seems to be the essential function of trans-translation. This Streptococcus pneumoniae (strain 70585) protein is SsrA-binding protein.